Consider the following 501-residue polypeptide: ATP synthase subunit alpha (501 aa).

169 to 176 is an ATP binding site; it reads GDRQTGKT.

This sequence belongs to the ATPase alpha/beta chains family. As to quaternary structure, F-type ATPases have 2 components, CF(1) - the catalytic core - and CF(0) - the membrane proton channel. CF(1) has five subunits: alpha(3), beta(3), gamma(1), delta(1), epsilon(1). CF(0) has three main subunits: a(1), b(2) and c(9-12). The alpha and beta chains form an alternating ring which encloses part of the gamma chain. CF(1) is attached to CF(0) by a central stalk formed by the gamma and epsilon chains, while a peripheral stalk is formed by the delta and b chains.

Its subcellular location is the cell membrane. It catalyses the reaction ATP + H2O + 4 H(+)(in) = ADP + phosphate + 5 H(+)(out). In terms of biological role, produces ATP from ADP in the presence of a proton gradient across the membrane. The alpha chain is a regulatory subunit. This is ATP synthase subunit alpha from Streptococcus gordonii (strain Challis / ATCC 35105 / BCRC 15272 / CH1 / DL1 / V288).